Reading from the N-terminus, the 226-residue chain is Ribonuclease 3 (226 aa).

The RNase III domain maps to 6–128; the sequence is INRLQRKLGY…LIGGIFLDSD (123 aa). Glutamate 41 contacts Mg(2+). The active site involves aspartate 45. Mg(2+)-binding residues include aspartate 114 and glutamate 117. Glutamate 117 is an active-site residue. The 71-residue stretch at 155–225 folds into the DRBM domain; sequence DPKTRLQEFL…AEQALKQLEL (71 aa).

The protein belongs to the ribonuclease III family. As to quaternary structure, homodimer. It depends on Mg(2+) as a cofactor.

The protein localises to the cytoplasm. It catalyses the reaction Endonucleolytic cleavage to 5'-phosphomonoester.. In terms of biological role, digests double-stranded RNA. Involved in the processing of primary rRNA transcript to yield the immediate precursors to the large and small rRNAs (23S and 16S). Processes some mRNAs, and tRNAs when they are encoded in the rRNA operon. Processes pre-crRNA and tracrRNA of type II CRISPR loci if present in the organism. The polypeptide is Ribonuclease 3 (Edwardsiella ictaluri (strain 93-146)).